The primary structure comprises 199 residues: uncharacterized protein (199 aa).

Its subcellular location is the mitochondrion. This is an uncharacterized protein from Schizosaccharomyces pombe (strain 972 / ATCC 24843) (Fission yeast).